Reading from the N-terminus, the 697-residue chain is Pentatricopeptide repeat-containing protein 1, mitochondrial (697 aa).

Residues 1-36 (MLKRAHYVALHVTLNHNGLSYQRVFSCLTQFPMLRH) constitute a mitochondrion transit peptide. PPR repeat units follow at residues 257–288 (RPFTYRVLIESFMKFGNFEEAEKLAYSYVKNK) and 294–328 (SDVFFSAILKFYAVGGDFQGFKKLLSFMTDYNVNF).

The protein localises to the mitochondrion. Its function is as follows. Mitochondrial RNA-binding protein required for the stability of the cox2 and cox3 mRNAs. The polypeptide is Pentatricopeptide repeat-containing protein 1, mitochondrial (ppr1) (Schizosaccharomyces pombe (strain 972 / ATCC 24843) (Fission yeast)).